We begin with the raw amino-acid sequence, 233 residues long: Biosynthetic peptidoglycan transglycosylase (233 aa).

The chain crosses the membrane as a helical span at residues 8–28 (LIALPVGIFIFFNAYVYGNII).

This sequence belongs to the glycosyltransferase 51 family.

Its subcellular location is the cell inner membrane. The catalysed reaction is [GlcNAc-(1-&gt;4)-Mur2Ac(oyl-L-Ala-gamma-D-Glu-L-Lys-D-Ala-D-Ala)](n)-di-trans,octa-cis-undecaprenyl diphosphate + beta-D-GlcNAc-(1-&gt;4)-Mur2Ac(oyl-L-Ala-gamma-D-Glu-L-Lys-D-Ala-D-Ala)-di-trans,octa-cis-undecaprenyl diphosphate = [GlcNAc-(1-&gt;4)-Mur2Ac(oyl-L-Ala-gamma-D-Glu-L-Lys-D-Ala-D-Ala)](n+1)-di-trans,octa-cis-undecaprenyl diphosphate + di-trans,octa-cis-undecaprenyl diphosphate + H(+). It functions in the pathway cell wall biogenesis; peptidoglycan biosynthesis. Peptidoglycan polymerase that catalyzes glycan chain elongation from lipid-linked precursors. This chain is Biosynthetic peptidoglycan transglycosylase, found in Neisseria meningitidis serogroup C (strain 053442).